The sequence spans 519 residues: MKPYYVTTAIAYPNAAPHVGHAYEYIATDAIARFKRLDRYDVRFLTGTDEHGLKVAQAAAAAGVPTAALARRNSDVFQRMQEALNISFDRFIRTTDADHHEASKELWRRMSAAGDIYLDNYSGWYSVRDERFFVESETQLVDGTRLTVETGTPVTWTEEQTYFFRLSAYTDKLLAHYHANPDFIAPETRRNEVISFVSGGLDDLSISRTSFDWGVQVPEHPDHVMYVWVDALTNYLTGAGFPDTDSELFRRYWPADLHMIGKDIIRFHAVYWPAFLMSAGIELPRRIFAHGFLHNRGEKMSKSVGNIVDPVALAEALGVDQVRYFLLREVPFGQDGSYSDEAIVTRINTDLANELGNLAQRSLSMVAKNLDGRVPNPGEFADADAALLATADGLLERVRGHFDAQAMHLALEAIWLMLGDANKYFSVQQPWVLRKSESEADQARFRTTLYVTCEVVRIAALLIQPVMPESAGKILDLLGQAPNQRSFAAVGVRLTPGTALPPPTGVFPRYQPPQPPEGK.

The 'HIGH' region motif lies at 11-21 (AYPNAAPHVGH). Residues 299 to 303 (KMSKS) carry the 'KMSKS' region motif. Lys302 contacts ATP. Residues 500-519 (LPPPTGVFPRYQPPQPPEGK) form a disordered region.

The protein belongs to the class-I aminoacyl-tRNA synthetase family. MetG type 2B subfamily. Monomer.

It localises to the cytoplasm. The enzyme catalyses tRNA(Met) + L-methionine + ATP = L-methionyl-tRNA(Met) + AMP + diphosphate. In terms of biological role, is required not only for elongation of protein synthesis but also for the initiation of all mRNA translation through initiator tRNA(fMet) aminoacylation. The chain is Methionine--tRNA ligase from Mycobacterium tuberculosis (strain ATCC 25618 / H37Rv).